Here is a 159-residue protein sequence, read N- to C-terminus: UPF0260 protein Avi_1324 (159 aa).

It belongs to the UPF0260 family.

This chain is UPF0260 protein Avi_1324, found in Allorhizobium ampelinum (strain ATCC BAA-846 / DSM 112012 / S4) (Agrobacterium vitis (strain S4)).